The chain runs to 264 residues: NAD-capped RNA hydrolase NudC (264 aa).

A substrate-binding site is contributed by Arg70. The Zn(2+) site is built by Cys99 and Cys102. Glu112 serves as a coordination point for substrate. Positions 117 and 122 each coordinate Zn(2+). Tyr127 serves as a coordination point for substrate. The region spanning 128-257 is the Nudix hydrolase domain; the sequence is PVICPSIIVA…TIALKLINAT (130 aa). 3 residues coordinate a divalent metal cation: Ala166, Glu182, and Glu186. Positions 167 to 188 match the Nudix box motif; sequence GFVEIGESFEQTVEREVFEETG. 200 to 207 provides a ligand contact to substrate; it reads QPWAFPNS. Glu227 contacts a divalent metal cation. Ala250 lines the substrate pocket.

The protein belongs to the Nudix hydrolase family. NudC subfamily. In terms of assembly, homodimer. It depends on Mg(2+) as a cofactor. Mn(2+) serves as cofactor. Zn(2+) is required as a cofactor.

It carries out the reaction a 5'-end NAD(+)-phospho-ribonucleoside in mRNA + H2O = a 5'-end phospho-adenosine-phospho-ribonucleoside in mRNA + beta-nicotinamide D-ribonucleotide + 2 H(+). It catalyses the reaction NAD(+) + H2O = beta-nicotinamide D-ribonucleotide + AMP + 2 H(+). The enzyme catalyses NADH + H2O = reduced beta-nicotinamide D-ribonucleotide + AMP + 2 H(+). Functionally, mRNA decapping enzyme that specifically removes the nicotinamide adenine dinucleotide (NAD) cap from a subset of mRNAs by hydrolyzing the diphosphate linkage to produce nicotinamide mononucleotide (NMN) and 5' monophosphate mRNA. The NAD-cap is present at the 5'-end of some mRNAs and stabilizes RNA against 5'-processing. Has preference for mRNAs with a 5'-end purine. Catalyzes the hydrolysis of a broad range of dinucleotide pyrophosphates. In Actinobacillus succinogenes (strain ATCC 55618 / DSM 22257 / CCUG 43843 / 130Z), this protein is NAD-capped RNA hydrolase NudC.